Reading from the N-terminus, the 680-residue chain is Probable potassium transport system protein Kup (680 aa).

A run of 12 helical transmembrane segments spans residues 16–36, 60–80, 103–123, 150–170, 177–197, 222–242, 255–275, 302–322, 351–371, 380–400, 407–427, and 432–452; these read IAGM…SPLY, ISLV…LIAL, WLVI…MLTP, EVII…KFGT, FGPI…MNLM, VGIL…ALYS, SWPY…VWLL, IPAI…LISG, LYIS…VFYF, AYGL…FHYL, WFLA…FFIA, and FMHG…IMFV.

This sequence belongs to the HAK/KUP transporter (TC 2.A.72) family.

Its subcellular location is the cell membrane. It carries out the reaction K(+)(in) + H(+)(in) = K(+)(out) + H(+)(out). Its function is as follows. Transport of potassium into the cell. Likely operates as a K(+):H(+) symporter. This Latilactobacillus sakei subsp. sakei (strain 23K) (Lactobacillus sakei subsp. sakei) protein is Probable potassium transport system protein Kup.